The primary structure comprises 315 residues: Methionyl-tRNA formyltransferase (315 aa).

A (6S)-5,6,7,8-tetrahydrofolate-binding site is contributed by 113–116 (SLLP).

Belongs to the Fmt family.

The enzyme catalyses L-methionyl-tRNA(fMet) + (6R)-10-formyltetrahydrofolate = N-formyl-L-methionyl-tRNA(fMet) + (6S)-5,6,7,8-tetrahydrofolate + H(+). Attaches a formyl group to the free amino group of methionyl-tRNA(fMet). The formyl group appears to play a dual role in the initiator identity of N-formylmethionyl-tRNA by promoting its recognition by IF2 and preventing the misappropriation of this tRNA by the elongation apparatus. In Shigella sonnei (strain Ss046), this protein is Methionyl-tRNA formyltransferase.